Reading from the N-terminus, the 150-residue chain is Cyclin-dependent kinases regulatory subunit (150 aa).

Positions Ala115–Gln137 are enriched in low complexity. The interval Ala115–Ser150 is disordered.

The protein belongs to the CKS family. As to quaternary structure, forms a stable but non-covalent complex with the CDC28 protein and with a cyclin.

Its function is as follows. Binds to the catalytic subunit of the cyclin dependent kinase (CDC28) and is essential for its biological function. In Saccharomyces cerevisiae (strain ATCC 204508 / S288c) (Baker's yeast), this protein is Cyclin-dependent kinases regulatory subunit.